Here is a 493-residue protein sequence, read N- to C-terminus: Phospholipid transfer protein (493 aa).

An N-terminal signal peptide occupies residues 1-17; it reads MALFGALFLALLAGAHA. Residue asparagine 64 is glycosylated (N-linked (GlcNAc...) (complex) asparagine). Residue asparagine 94 is glycosylated (N-linked (GlcNAc...) asparagine). N-linked (GlcNAc...) (complex) asparagine glycosylation is present at asparagine 117. The N-linked (GlcNAc...) asparagine glycan is linked to asparagine 143. Cysteine 146 and cysteine 185 are joined by a disulfide. Residue asparagine 245 is glycosylated (N-linked (GlcNAc...) (complex) asparagine). An N-linked (GlcNAc...) asparagine glycan is attached at asparagine 398.

It belongs to the BPI/LBP/Plunc superfamily. BPI/LBP family. In terms of processing, glycosylation is necessary for secretion and its phospholipid transfer activity. As to expression, widely expressed. Highest level of expression in the ovary, thymus and placenta, with moderate levels found in the pancreas, small intestine, testis, lung and prostrate. Low level expression in the kidney, liver and spleen, with very low levels found in the heart, colon, skeletal muscle, leukocytes and brain. Expressed in the cortical neurons.

Its subcellular location is the secreted. The protein resides in the nucleus. It carries out the reaction a 1,2-diacyl-sn-glycero-3-phosphocholine(in) = a 1,2-diacyl-sn-glycero-3-phosphocholine(out). The enzyme catalyses a 1,2-diacyl-sn-glycero-3-phosphoethanolamine(in) = a 1,2-diacyl-sn-glycero-3-phosphoethanolamine(out). The catalysed reaction is a 1,2-diacyl-sn-glycerol(in) = a 1,2-diacyl-sn-glycerol(out). It catalyses the reaction a 1,2-diacyl-sn-glycero-3-phosphate(in) = a 1,2-diacyl-sn-glycero-3-phosphate(out). It carries out the reaction a sphingomyelin(in) = a sphingomyelin(out). The enzyme catalyses a 1,2-diacyl-sn-glycero-3-phospho-(1'-sn-glycerol)(in) = a 1,2-diacyl-sn-glycero-3-phospho-(1'-sn-glycerol)(out). The catalysed reaction is a 1,2-diacyl-sn-glycero-3-phospho-(1D-myo-inositol)(in) = a 1,2-diacyl-sn-glycero-3-phospho-(1D-myo-inositol)(out). It catalyses the reaction 1-hexadecanoyl-2-(5Z,8Z,11Z,14Z-eicosatetraenoyl)-sn-glycero-3-phosphoethanolamine(in) = 1-hexadecanoyl-2-(5Z,8Z,11Z,14Z-eicosatetraenoyl)-sn-glycero-3-phosphoethanolamine(out). It carries out the reaction N-(hexadecanoyl)-sphing-4-enine-1-phosphocholine(in) = N-(hexadecanoyl)-sphing-4-enine-1-phosphocholine(out). The enzyme catalyses 1,2-dihexadecanoyl-sn-glycero-3-phosphocholine(in) = 1,2-dihexadecanoyl-sn-glycero-3-phosphocholine(out). In terms of biological role, mediates the transfer of phospholipids and free cholesterol from triglyceride-rich lipoproteins (low density lipoproteins or LDL and very low density lipoproteins or VLDL) into high-density lipoproteins (HDL) as well as the exchange of phospholipids between triglyceride-rich lipoproteins themselves. Facilitates the transfer of a spectrum of different lipid molecules, including diacylglycerol, phosphatidic acid, sphingomyelin, phosphatidylcholine, phosphatidylinositol, phosphatidylglycerol, cerebroside and phosphatidyl ethanolamine. Plays an important role in HDL remodeling which involves modulating the size and composition of HDL. Also plays a key role in the uptake of cholesterol from peripheral cells and tissues that is subsequently transported to the liver for degradation and excretion. Two distinct forms of PLTP exist in plasma: an active form that can transfer phosphatidylcholine from phospholipid vesicles to HDL, and an inactive form that lacks this capability. In Homo sapiens (Human), this protein is Phospholipid transfer protein (PLTP).